The chain runs to 615 residues: Granule-bound starch synthase 1, chloroplastic/amyloplastic (615 aa).

The N-terminal 70 residues, 1–70 (MAALVTSQLA…DRRCLSMVVR (70 aa)), are a transit peptide targeting the chloroplast. Lys91 contacts ADP-alpha-D-glucose.

It belongs to the glycosyltransferase 1 family. Bacterial/plant glycogen synthase subfamily. Found in seeds and pollen.

It localises to the plastid. Its subcellular location is the chloroplast. The protein localises to the amyloplast. It carries out the reaction an NDP-alpha-D-glucose + [(1-&gt;4)-alpha-D-glucosyl](n) = [(1-&gt;4)-alpha-D-glucosyl](n+1) + a ribonucleoside 5'-diphosphate + H(+). It functions in the pathway glycan biosynthesis; starch biosynthesis. This chain is Granule-bound starch synthase 1, chloroplastic/amyloplastic (WAXY), found in Triticum aestivum (Wheat).